Reading from the N-terminus, the 232-residue chain is Large ribosomal subunit protein uL1 (232 aa).

This sequence belongs to the universal ribosomal protein uL1 family. As to quaternary structure, part of the 50S ribosomal subunit.

Its function is as follows. Binds directly to 23S rRNA. The L1 stalk is quite mobile in the ribosome, and is involved in E site tRNA release. Protein L1 is also a translational repressor protein, it controls the translation of the L11 operon by binding to its mRNA. In Xanthomonas oryzae pv. oryzae (strain KACC10331 / KXO85), this protein is Large ribosomal subunit protein uL1.